The primary structure comprises 143 residues: Putative pre-16S rRNA nuclease (143 aa).

Belongs to the YqgF nuclease family.

It is found in the cytoplasm. Its function is as follows. Could be a nuclease involved in processing of the 5'-end of pre-16S rRNA. The polypeptide is Putative pre-16S rRNA nuclease (Lactobacillus johnsonii (strain CNCM I-12250 / La1 / NCC 533)).